Consider the following 465-residue polypeptide: Antithrombin-III (465 aa).

Positions 1–32 are cleaved as a signal peptide; that stretch reads MISNGIGTVTTGKRSMCLFPLLLIGLWGCVTC. Intrachain disulfides connect C41-C161 and C54-C128. T64 is subject to Phosphothreonine. S69 bears the Phosphoserine mark. W82 lines the heparin pocket. The N-linked (GlcNAc...) asparagine glycan is linked to N129. R162 serves as a coordination point for heparin. N-linked (GlcNAc...) asparagine glycosylation occurs at N168. A heparin-binding site is contributed by R178. N188 and N225 each carry an N-linked (GlcNAc...) asparagine glycan. A disulfide bridge connects residues C280 and C463.

It belongs to the serpin family. In terms of assembly, forms protease inhibiting heterodimer with TMPRSS7. Phosphorylated by FAM20C in the extracellular medium. In terms of tissue distribution, plasma.

The protein localises to the secreted. The protein resides in the extracellular space. Most important serine protease inhibitor in plasma that regulates the blood coagulation cascade. AT-III inhibits thrombin, matriptase-3/TMPRSS7, as well as factors IXa, Xa and XIa. Its inhibitory activity is greatly enhanced in the presence of heparin. The protein is Antithrombin-III (SERPINC1) of Ovis aries (Sheep).